Here is a 462-residue protein sequence, read N- to C-terminus: uncharacterized protein (462 aa).

The next 2 membrane-spanning stretches (helical) occupy residues 12–32 (WWWL…APTV) and 257–277 (GLCV…LELV).

It belongs to the HHV-5 US29 protein family.

It is found in the host membrane. This is an uncharacterized protein from Homo sapiens (Human).